A 185-amino-acid polypeptide reads, in one-letter code: Large ribosomal subunit protein uL5 (185 aa).

Belongs to the universal ribosomal protein uL5 family. As to quaternary structure, part of the 50S ribosomal subunit; part of the 5S rRNA/L5/L18/L25 subcomplex. Contacts the 5S rRNA and the P site tRNA. Forms a bridge to the 30S subunit in the 70S ribosome.

In terms of biological role, this is one of the proteins that bind and probably mediate the attachment of the 5S RNA into the large ribosomal subunit, where it forms part of the central protuberance. In the 70S ribosome it contacts protein S13 of the 30S subunit (bridge B1b), connecting the 2 subunits; this bridge is implicated in subunit movement. Contacts the P site tRNA; the 5S rRNA and some of its associated proteins might help stabilize positioning of ribosome-bound tRNAs. This chain is Large ribosomal subunit protein uL5, found in Afipia carboxidovorans (strain ATCC 49405 / DSM 1227 / KCTC 32145 / OM5) (Oligotropha carboxidovorans).